Here is a 342-residue protein sequence, read N- to C-terminus: Succinylglutamate desuccinylase (342 aa).

His62, Glu65, and His158 together coordinate Zn(2+). Residue Glu222 is part of the active site.

The protein belongs to the AspA/AstE family. Succinylglutamate desuccinylase subfamily. Zn(2+) serves as cofactor.

It carries out the reaction N-succinyl-L-glutamate + H2O = L-glutamate + succinate. It participates in amino-acid degradation; L-arginine degradation via AST pathway; L-glutamate and succinate from L-arginine: step 5/5. In terms of biological role, transforms N(2)-succinylglutamate into succinate and glutamate. In Shewanella frigidimarina (strain NCIMB 400), this protein is Succinylglutamate desuccinylase.